Here is a 230-residue protein sequence, read N- to C-terminus: 7-cyano-7-deazaguanine synthase (230 aa).

ATP is bound at residue 9–19 (YSGGLDSTTCL). Residues Cys190, Cys200, Cys203, and Cys206 each coordinate Zn(2+).

Belongs to the QueC family. Requires Zn(2+) as cofactor.

It carries out the reaction 7-carboxy-7-deazaguanine + NH4(+) + ATP = 7-cyano-7-deazaguanine + ADP + phosphate + H2O + H(+). Its pathway is purine metabolism; 7-cyano-7-deazaguanine biosynthesis. Functionally, catalyzes the ATP-dependent conversion of 7-carboxy-7-deazaguanine (CDG) to 7-cyano-7-deazaguanine (preQ(0)). The protein is 7-cyano-7-deazaguanine synthase of Syntrophotalea carbinolica (strain DSM 2380 / NBRC 103641 / GraBd1) (Pelobacter carbinolicus).